Reading from the N-terminus, the 43-residue chain is Photosystem II reaction center protein Psb30 (43 aa).

A helical membrane pass occupies residues 15-35; that stretch reads VIFQLTFVSLILISGPVVIFL.

This sequence belongs to the Psb30/Ycf12 family. In terms of assembly, PSII is composed of 1 copy each of membrane proteins PsbA, PsbB, PsbC, PsbD, PsbE, PsbF, PsbH, PsbI, PsbJ, PsbK, PsbL, PsbM, PsbT, PsbX, PsbY, PsbZ, Psb30/Ycf12, peripheral proteins PsbO, CyanoQ (PsbQ), PsbU, PsbV and a large number of cofactors. It forms dimeric complexes.

It is found in the cellular thylakoid membrane. A core subunit of photosystem II (PSII), probably helps stabilize the reaction center. The chain is Photosystem II reaction center protein Psb30 from Picosynechococcus sp. (strain ATCC 27264 / PCC 7002 / PR-6) (Agmenellum quadruplicatum).